The chain runs to 974 residues: Exocyst complex component 4 (974 aa).

N-acetylalanine is present on alanine 2. Position 9 is an N6-acetyllysine (lysine 9). 2 positions are modified to phosphoserine: serine 32 and serine 226. Positions 32 to 114 (STSDDVEDRE…HCKRDELRKL (83 aa)) form a coiled coil. Threonine 233 and threonine 237 each carry phosphothreonine. The residue at position 468 (serine 468) is a Phosphoserine.

This sequence belongs to the SEC8 family. As to quaternary structure, the exocyst complex is composed of EXOC1, EXOC2, EXOC3, EXOC4, EXOC5, EXOC6, EXOC7 and EXOC8. Interacts with BIRC6/bruce. Interacts with MYRIP. Interacts with SH3BP1; required for the localization of both SH3BP1 and the exocyst to the leading edge of migrating cells. Interacts with SLC6A9.

It is found in the midbody. It localises to the midbody ring. The protein resides in the cell projection. The protein localises to the cytoplasm. Its subcellular location is the cytoskeleton. It is found in the microtubule organizing center. It localises to the centrosome. Its function is as follows. Component of the exocyst complex involved in the docking of exocytic vesicles with fusion sites on the plasma membrane. The polypeptide is Exocyst complex component 4 (EXOC4) (Homo sapiens (Human)).